The chain runs to 253 residues: FAS1 domain-containing protein CAGL0M08734g (253 aa).

The first 16 residues, 1 to 16, serve as a signal peptide directing secretion; that stretch reads MVALKYVLVPVALVAA. Positions 84-248 constitute an FAS1 domain; it reads DIYLDSQISV…GVILVIDATL (165 aa).

It localises to the vacuole. The polypeptide is FAS1 domain-containing protein CAGL0M08734g (Candida glabrata (strain ATCC 2001 / BCRC 20586 / JCM 3761 / NBRC 0622 / NRRL Y-65 / CBS 138) (Yeast)).